Reading from the N-terminus, the 156-residue chain is MAEAKQVLDVTDIQKILPHRYPLLLLDRIIEFKRKERIVAIKNVTINEQFFQGHFPGYPIMPGVLIVEAIAQAGGALLLTEIPDQNEKLMVFAGIEKAKFRKPVVPGDQVRLEVDVIVWRNTAAKLMGKAFVGDKLACEATVSCQIVPRPAKPENS.

The active site involves histidine 54.

It belongs to the thioester dehydratase family. FabZ subfamily.

Its subcellular location is the cytoplasm. The enzyme catalyses a (3R)-hydroxyacyl-[ACP] = a (2E)-enoyl-[ACP] + H2O. Its function is as follows. Involved in unsaturated fatty acids biosynthesis. Catalyzes the dehydration of short chain beta-hydroxyacyl-ACPs and long chain saturated and unsaturated beta-hydroxyacyl-ACPs. This is 3-hydroxyacyl-[acyl-carrier-protein] dehydratase FabZ from Koribacter versatilis (strain Ellin345).